A 56-amino-acid chain; its full sequence is Large ribosomal subunit protein bL32 (56 aa).

A disordered region spans residues 1 to 29; the sequence is MAVQQNKPSRSKRGMRRSHDALTTSSVSV.

This sequence belongs to the bacterial ribosomal protein bL32 family.

This chain is Large ribosomal subunit protein bL32, found in Pectobacterium atrosepticum (strain SCRI 1043 / ATCC BAA-672) (Erwinia carotovora subsp. atroseptica).